The following is a 445-amino-acid chain: UPF0761 membrane protein Mlg_0521 (445 aa).

6 consecutive transmembrane segments (helical) span residues 56-76 (LLAL…FPVF), 112-132 (GLTV…MAAI), 152-172 (FMVY…SLGI), 195-215 (LLAG…YAAV), 225-245 (ALLG…GFGW), and 259-279 (ALAA…VVLV).

Belongs to the UPF0761 family.

Its subcellular location is the cell inner membrane. The sequence is that of UPF0761 membrane protein Mlg_0521 from Alkalilimnicola ehrlichii (strain ATCC BAA-1101 / DSM 17681 / MLHE-1).